The following is a 210-amino-acid chain: Somatotropin (210 aa).

The N-terminal stretch at 1-22 is a signal peptide; the sequence is MGQVFLLMPVLLVSCFLSHGAA. H38 contributes to the Zn(2+) binding site. Cysteines 71 and 183 form a disulfide. E192 contacts Zn(2+). An intrachain disulfide couples C200 to C208.

It belongs to the somatotropin/prolactin family.

It localises to the secreted. Growth hormone plays an important role in growth control and is involved in the regulation of several anabolic processes. Implicated as an osmoregulatory substance important for seawater adaptation. The sequence is that of Somatotropin (gh) from Oncorhynchus masou (Cherry salmon).